Here is a 544-residue protein sequence, read N- to C-terminus: MTQYISKYSPIDFGEYGYDKSFPYCYNGTCKNFSKLMWLVINEKSNPRIDGHKKIVKHLKKNKRKINAQNEHGWTALMIASILSNDWSSIKTVKLLLKKGADPNIENYNYSQTVLKLAASNVKYASNIKTIKLLIHYGADINHKNLLGVSVLHYCYIDYYTKSDNLEVIKLLLSYGMDINSVTNQGNTLLYIVSKVSQNNNSTETVKFLLENNADPNIPNNKGTTALMVASKYSNSTSNLATVKLLLDYEANINFMNKYNETALSKVVSNFYESNYNKNNFMTLKFLIQKGAIDIPIGIDKLSILMVAVIRTYCSENSDNFTKLIELLLKHFNPNIQCSNGKTVLHYLCNKQVCNFPYVDVINLLLKAGINPNIKDNQGKTALILACDNYCFLKNKEAVRLLCKVSTINTIDNTGQSALDYFLNKYKEKYTNILTIILKYGAYCVNKNNINKIKILKCFDYLNKNNKINKIHEKICDQIKLKAIKHQIRPTSLRMKIISLNWYSRSYQTDKIISWNNLDAIDYLGAIDIDDLRYKISDCTKYID.

11 ANK repeats span residues 31-71 (KNFS…AQNE), 72-105 (HGWTALMIASILSNDWSSIKTVKLLLKKGADPNI), 110-143 (YSQTVLKLAASNVKYASNIKTIKLLIHYGADINH), 147-181 (LGVSVLHYCYIDYYTKSDNLEVIKLLLSYGMDINS), 185-218 (QGNTLLYIVSKVSQNNNSTETVKFLLENNADPNI), 222-255 (KGTTALMVASKYSNSTSNLATVKLLLDYEANINF), 259-297 (YNETALSKVVSNFYESNYNKNNFMTLKFLIQKGAIDIPI), 300-339 (DKLSILMVAVIRTYCSENSDNFTKLIELLLKHFNPNIQCS), 340-374 (NGKTVLHYLCNKQVCNFPYVDVINLLLKAGINPNI), 378-413 (QGKTALILACDNYCFLKNKEAVRLLCKVSTINTIDN), and 414-447 (TGQSALDYFLNKYKEKYTNILTIILKYGAYCVNK).

The sequence is that of Putative ankyrin repeat protein L289 from Acanthamoeba polyphaga mimivirus (APMV).